The sequence spans 160 residues: Eukaryotic translation initiation factor 5A (160 aa).

Positions 1–10 (MSDDDHHFES) are enriched in basic and acidic residues. The tract at residues 1-23 (MSDDDHHFESSADAGASKTYPQQ) is disordered. Lysine 52 is modified (hypusine).

Belongs to the eIF-5A family. In terms of processing, lys-52 undergoes hypusination, a unique post-translational modification that consists in the addition of a butylamino group from spermidine to lysine side chain, leading to the formation of the unusual amino acid hypusine. eIF-5As are the only known proteins to undergo this modification, which is essential for their function.

Translation factor that promotes translation elongation and termination, particularly upon ribosome stalling at specific amino acid sequence contexts. Binds between the exit (E) and peptidyl (P) site of the ribosome and promotes rescue of stalled ribosome: specifically required for efficient translation of polyproline-containing peptides as well as other motifs that stall the ribosome. Acts as a ribosome quality control (RQC) cofactor by joining the RQC complex to facilitate peptidyl transfer during CAT tailing step. This Dianthus caryophyllus (Carnation) protein is Eukaryotic translation initiation factor 5A.